Reading from the N-terminus, the 430-residue chain is Enolase (430 aa).

Position 164 (Gln164) interacts with (2R)-2-phosphoglycerate. The active-site Proton donor is Glu206. Residues Asp243, Glu286, and Asp313 each contribute to the Mg(2+) site. Positions 338, 367, 368, and 389 each coordinate (2R)-2-phosphoglycerate. The active-site Proton acceptor is Lys338.

This sequence belongs to the enolase family. As to quaternary structure, component of the RNA degradosome, a multiprotein complex involved in RNA processing and mRNA degradation. The cofactor is Mg(2+).

The protein localises to the cytoplasm. It is found in the secreted. Its subcellular location is the cell surface. The catalysed reaction is (2R)-2-phosphoglycerate = phosphoenolpyruvate + H2O. The protein operates within carbohydrate degradation; glycolysis; pyruvate from D-glyceraldehyde 3-phosphate: step 4/5. Functionally, catalyzes the reversible conversion of 2-phosphoglycerate (2-PG) into phosphoenolpyruvate (PEP). It is essential for the degradation of carbohydrates via glycolysis. The sequence is that of Enolase from Dichelobacter nodosus (strain VCS1703A).